Here is a 75-residue protein sequence, read N- to C-terminus: Small ribosomal subunit protein bS16 (75 aa).

Belongs to the bacterial ribosomal protein bS16 family.

This Nitratiruptor sp. (strain SB155-2) protein is Small ribosomal subunit protein bS16.